The sequence spans 754 residues: Exocyst complex component EXO84A (754 aa).

Disordered stretches follow at residues 514-540 (RILP…EQRE) and 734-754 (GHGE…YTSN). Residues 518–527 (QGTSQSTPRR) show a composition bias toward polar residues. Residues 528-540 (GSSDRQNRPEQRE) show a composition bias toward basic and acidic residues. Residues 741-754 (TSPSVSSAKSYTSN) show a composition bias toward polar residues.

This sequence belongs to the EXO84 family. As to quaternary structure, the exocyst complex is composed of SEC3, SEC5, SEC6, SEC8, SEC10, EXO70A1 and EXO84.

Its function is as follows. Component of the exocyst complex involved in the docking of exocytic vesicles with fusion sites on the plasma membrane during regulated or polarized secretion. Involved in polarized cell growth and organ morphogenesis. During cytokinesis, involved in cell plate initiation, cell plate maturation and formation of new primary cell wall. This chain is Exocyst complex component EXO84A (EXO84A), found in Arabidopsis thaliana (Mouse-ear cress).